The chain runs to 273 residues: Translation initiation factor IF-3, mitochondrial (273 aa).

The transit peptide at Met-1–Gly-32 directs the protein to the mitochondrion. Positions Pro-33–Leu-92 are cleaved as a propeptide — removed in mature form. The segment at Glu-242–Gln-273 is disordered. The segment covering Thr-252–Asp-265 has biased composition (basic and acidic residues).

Belongs to the IF-3 family.

It is found in the mitochondrion. IF-3 binds to the 28S ribosomal subunit and shifts the equilibrium between 55S ribosomes and their 39S and 28S subunits in favor of the free subunits, thus enhancing the availability of 28S subunits on which protein synthesis initiation begins. The protein is Translation initiation factor IF-3, mitochondrial (MTIF3) of Bos taurus (Bovine).